Reading from the N-terminus, the 29-residue chain is uncharacterized protein (29 aa).

Its subcellular location is the plastid. It localises to the chloroplast. This is an uncharacterized protein from Trieres chinensis (Marine centric diatom).